The primary structure comprises 143 residues: Small ribosomal subunit protein eS19B (143 aa).

It belongs to the eukaryotic ribosomal protein eS19 family. Component of the small ribosomal subunit (SSU). Mature yeast ribosomes consist of a small (40S) and a large (60S) subunit. The 40S small subunit contains 1 molecule of ribosomal RNA (18S rRNA) and at least 33 different proteins. The large 60S subunit contains 3 rRNA molecules (25S, 5.8S and 5S rRNA) and at least 46 different proteins.

Its subcellular location is the cytoplasm. The protein localises to the nucleus. Its function is as follows. Component of the ribosome, a large ribonucleoprotein complex responsible for the synthesis of proteins in the cell. The small ribosomal subunit (SSU) binds messenger RNAs (mRNAs) and translates the encoded message by selecting cognate aminoacyl-transfer RNA (tRNA) molecules. The large subunit (LSU) contains the ribosomal catalytic site termed the peptidyl transferase center (PTC), which catalyzes the formation of peptide bonds, thereby polymerizing the amino acids delivered by tRNAs into a polypeptide chain. The nascent polypeptides leave the ribosome through a tunnel in the LSU and interact with protein factors that function in enzymatic processing, targeting, and the membrane insertion of nascent chains at the exit of the ribosomal tunnel. eS19 is required for proper maturation of the small (40S) ribosomal subunit. Binds to 40S pre-ribosomal particles, probably required after association of NOC4 but before association of ENP1, TSR1 and RIO2 with 20/21S pre-rRNA. The protein is Small ribosomal subunit protein eS19B (rps1902) of Schizosaccharomyces pombe (strain 972 / ATCC 24843) (Fission yeast).